We begin with the raw amino-acid sequence, 335 residues long: Methionyl-tRNA formyltransferase (335 aa).

(6S)-5,6,7,8-tetrahydrofolate is bound at residue 122 to 125 (SLLP). The disordered stretch occupies residues 203–222 (DSHGPLGEPQDPAKVSKAPR).

It belongs to the Fmt family.

It catalyses the reaction L-methionyl-tRNA(fMet) + (6R)-10-formyltetrahydrofolate = N-formyl-L-methionyl-tRNA(fMet) + (6S)-5,6,7,8-tetrahydrofolate + H(+). Functionally, attaches a formyl group to the free amino group of methionyl-tRNA(fMet). The formyl group appears to play a dual role in the initiator identity of N-formylmethionyl-tRNA by promoting its recognition by IF2 and preventing the misappropriation of this tRNA by the elongation apparatus. In Rhodopirellula baltica (strain DSM 10527 / NCIMB 13988 / SH1), this protein is Methionyl-tRNA formyltransferase.